Here is a 146-residue protein sequence, read N- to C-terminus: Cytochrome b5 type B (146 aa).

Residues 1–11 (MATPEASGSGR) constitute a propeptide that is removed on maturation. Residues 20 to 96 (VTYYRLEEVA…LKQYYIGDVH (77 aa)) enclose the Cytochrome b5 heme-binding domain. Lysine 30 is modified (N6-acetyllysine). Heme is bound by residues histidine 55 and histidine 79. Serine 80 carries the post-translational modification Phosphoserine. Residues 119–136 (WAYWIVPIVGAILIGFLY) traverse the membrane as a helical segment.

It belongs to the cytochrome b5 family. As to quaternary structure, component of a complex composed of cytochrome b5, NADH-cytochrome b5 reductase (CYB5R3) and MTARC2.

Its subcellular location is the mitochondrion outer membrane. Cytochrome b5 is a membrane-bound hemoprotein functioning as an electron carrier for several membrane-bound oxygenases. The protein is Cytochrome b5 type B (Cyb5b) of Rattus norvegicus (Rat).